The primary structure comprises 628 residues: DNA-directed RNA polymerase subunit beta' (628 aa).

Positions 70, 72, 85, and 88 each coordinate Zn(2+). Residues Asp472, Asp474, and Asp476 each contribute to the Mg(2+) site.

It belongs to the RNA polymerase beta' chain family. RpoC1 subfamily. In plastids the minimal PEP RNA polymerase catalytic core is composed of four subunits: alpha, beta, beta', and beta''. When a (nuclear-encoded) sigma factor is associated with the core the holoenzyme is formed, which can initiate transcription. Requires Mg(2+) as cofactor. The cofactor is Zn(2+).

It localises to the plastid. It is found in the chloroplast. It catalyses the reaction RNA(n) + a ribonucleoside 5'-triphosphate = RNA(n+1) + diphosphate. In terms of biological role, DNA-dependent RNA polymerase catalyzes the transcription of DNA into RNA using the four ribonucleoside triphosphates as substrates. The sequence is that of DNA-directed RNA polymerase subunit beta' from Gracilaria tenuistipitata var. liui (Red alga).